A 432-amino-acid chain; its full sequence is D-amino acid dehydrogenase (432 aa).

FAD is bound at residue 3–17; it reads VVILGSGVVGVASAW.

Belongs to the DadA oxidoreductase family. The cofactor is FAD.

The catalysed reaction is a D-alpha-amino acid + A + H2O = a 2-oxocarboxylate + AH2 + NH4(+). Its pathway is amino-acid degradation; D-alanine degradation; NH(3) and pyruvate from D-alanine: step 1/1. Functionally, oxidative deamination of D-amino acids. The chain is D-amino acid dehydrogenase from Shigella boydii serotype 18 (strain CDC 3083-94 / BS512).